Reading from the N-terminus, the 500-residue chain is Putative beta-lactamase-like 1 (500 aa).

It belongs to the beta-lactamase family.

The protein is Putative beta-lactamase-like 1 (LACTBL1) of Homo sapiens (Human).